The chain runs to 93 residues: DNA-binding protein Fis (93 aa).

Positions 74–93 form a DNA-binding region, H-T-H motif; that stretch reads QTRAAQMMGINRGTLRKKLK.

It belongs to the transcriptional regulatory Fis family. Homodimer.

Its function is as follows. Activates ribosomal RNA transcription. Plays a direct role in upstream activation of rRNA promoters. The chain is DNA-binding protein Fis from Proteus vulgaris.